The primary structure comprises 524 residues: PiggyBac transposable element-derived protein 5 (524 aa).

Positions 30–117 (DDVFGESGPD…DTGGPTRKMP (88 aa)) are disordered. The segment covering 47 to 59 (STSAASRSSSAAS) has biased composition (low complexity). The span at 67 to 79 (PGPPGAAPPPPRA) shows a compositional bias: pro residues. The segment covering 98 to 108 (LRDRPPPRFED) has biased composition (basic and acidic residues). Residue Ser521 is modified to Phosphoserine.

The protein localises to the nucleus. Its function is as follows. Transposase that mediates sequence-specific genomic rearrangements. Can induce genomic rearrangements that inactivate the HPRT1 gene. The polypeptide is PiggyBac transposable element-derived protein 5 (PGBD5) (Homo sapiens (Human)).